A 265-amino-acid polypeptide reads, in one-letter code: Putative 2-aminoethylphosphonate transport system permease protein PhnV (265 aa).

A run of 6 helical transmembrane segments spans residues 13 to 33 (GVVA…VILM), 69 to 89 (LTIG…AALA), 104 to 124 (VFYL…LVAF), 131 to 151 (MNGT…AFTF), 185 to 205 (LPLL…LSMG), and 233 to 253 (NIAD…LLMM). The 189-residue stretch at 65–253 (LLASLTIGFC…LVAITLLLMM (189 aa)) folds into the ABC transmembrane type-1 domain.

This sequence belongs to the binding-protein-dependent transport system permease family.

The protein resides in the cell inner membrane. In terms of biological role, probably part of the PhnSTUV complex (TC 3.A.1.11.5) involved in 2-aminoethylphosphonate import. Probably responsible for the translocation of the substrate across the membrane. The chain is Putative 2-aminoethylphosphonate transport system permease protein PhnV (phnV) from Salmonella typhimurium (strain LT2 / SGSC1412 / ATCC 700720).